A 968-amino-acid chain; its full sequence is Alanine--tRNA ligase, cytoplasmic (968 aa).

Methionine 1 carries the N-acetylmethionine modification. ATP contacts are provided by residues arginine 77, histidine 95, tryptophan 176, and 214-216; that span reads IWN. Residues asparagine 216 and aspartate 239 each contribute to the L-alanine site. Glycine 243 provides a ligand contact to ATP. A phosphoserine mark is found at serine 399 and serine 555. Residues histidine 605, histidine 609, cysteine 723, and histidine 727 each contribute to the Zn(2+) site. Residues 750–763 carry the Nuclear localization signal motif; the sequence is RRIVAVTGAEAQKA. Lysine 876 is subject to N6-acetyllysine. Lysine 943 carries the N6,N6,N6-trimethyllysine; alternate modification. Lysine 943 carries the N6,N6-dimethyllysine; alternate modification. Lysine 943 carries the post-translational modification N6-methyllysine; alternate.

This sequence belongs to the class-II aminoacyl-tRNA synthetase family. As to quaternary structure, monomer. Interacts with ANKRD16; the interaction is direct. The cofactor is Zn(2+). Post-translationally, ISGylated. In terms of processing, methylation at 'Lys-943' by METTL21C.

The protein resides in the cytoplasm. Its subcellular location is the nucleus. It catalyses the reaction tRNA(Ala) + L-alanine + ATP = L-alanyl-tRNA(Ala) + AMP + diphosphate. It carries out the reaction (S)-lactate + ATP + H(+) = (S)-lactoyl-AMP + diphosphate. The catalysed reaction is (S)-lactoyl-AMP + L-lysyl-[protein] = N(6)-[(S)-lactoyl]-L-lysyl-[protein] + AMP + 2 H(+). The protein lactyltransferase activity is inhibited by beta-alanine. Catalyzes the attachment of alanine to tRNA(Ala) in a two-step reaction: alanine is first activated by ATP to form Ala-AMP and then transferred to the acceptor end of tRNA(Ala). Also edits incorrectly charged tRNA(Ala) via its editing domain. In presence of high levels of lactate, also acts as a protein lactyltransferase that mediates lactylation of lysine residues in target proteins, such as TEAD1, TP53/p53 and YAP1. Protein lactylation takes place in a two-step reaction: lactate is first activated by ATP to form lactate-AMP and then transferred to lysine residues of target proteins. Acts as an inhibitor of TP53/p53 activity by catalyzing lactylation of TP53/p53. Acts as a positive regulator of the Hippo pathway by mediating lactylation of TEAD1 and YAP1. The chain is Alanine--tRNA ligase, cytoplasmic from Mus musculus (Mouse).